Reading from the N-terminus, the 93-residue chain is Small ribosomal subunit protein uS19 (93 aa).

This sequence belongs to the universal ribosomal protein uS19 family.

Its function is as follows. Protein S19 forms a complex with S13 that binds strongly to the 16S ribosomal RNA. This chain is Small ribosomal subunit protein uS19, found in Clostridium perfringens (strain ATCC 13124 / DSM 756 / JCM 1290 / NCIMB 6125 / NCTC 8237 / Type A).